A 463-amino-acid chain; its full sequence is Cysteine--tRNA ligase (463 aa).

Cys29 is a Zn(2+) binding site. Residues 31–41 (PTVYDFAHIGN) carry the 'HIGH' region motif. Residues Cys227, His252, and Glu256 each contribute to the Zn(2+) site. The short motif at 285-289 (KMSKS) is the 'KMSKS' region element. Lys288 provides a ligand contact to ATP.

Belongs to the class-I aminoacyl-tRNA synthetase family. In terms of assembly, monomer. Requires Zn(2+) as cofactor.

It localises to the cytoplasm. The catalysed reaction is tRNA(Cys) + L-cysteine + ATP = L-cysteinyl-tRNA(Cys) + AMP + diphosphate. This Rhodopseudomonas palustris (strain BisA53) protein is Cysteine--tRNA ligase.